A 325-amino-acid chain; its full sequence is Aldo-keto reductase family 1 member A1 (325 aa).

A2 is modified (N-acetylalanine). S4 carries the phosphoserine modification. NADP(+) is bound by residues 11–20, T21, W22, and D45; that span reads GQKMPLIGLG. The Proton donor role is filled by Y50. An N6-acetyllysine; alternate modification is found at K127. Residue K127 is modified to N6-succinyllysine; alternate. Position 145 is an N6-succinyllysine (K145). Positions 162, 163, 211, 213, 215, 216, 263, 264, 265, 266, 269, 272, and 273 each coordinate NADP(+). At S211 the chain carries Phosphoserine.

Belongs to the aldo/keto reductase family. Monomer.

It is found in the cytoplasm. The protein resides in the cytosol. It localises to the apical cell membrane. The enzyme catalyses a primary alcohol + NADP(+) = an aldehyde + NADPH + H(+). It catalyses the reaction glycerol + NADP(+) = D-glyceraldehyde + NADPH + H(+). The catalysed reaction is glycerol + NADP(+) = L-glyceraldehyde + NADPH + H(+). It carries out the reaction L-gulonate + NADP(+) = aldehydo-D-glucuronate + NADPH + H(+). The enzyme catalyses L-gulono-1,4-lactone + NADP(+) = D-glucurono-3,6-lactone + NADPH + H(+). It catalyses the reaction allyl alcohol + NADP(+) = acrolein + NADPH + H(+). The catalysed reaction is hydroxyacetone + NADP(+) = methylglyoxal + NADPH + H(+). It carries out the reaction 3-deoxyfructose + NADP(+) = 3-deoxyglucosone + NADPH + H(+). The enzyme catalyses (R)-mevalonate + NADP(+) = (R)-mevaldate + NADPH + H(+). It catalyses the reaction pyridine 3-methanol + NADP(+) = pyridine-3-carbaldehyde + NADPH + H(+). The catalysed reaction is S-nitroso-CoA + NADPH + H(+) = sulfinamide-CoA + NADP(+). It carries out the reaction S-nitrosoglutathione + NADPH + H(+) = S-(hydroxysulfenamide)glutathione + NADP(+). Its function is as follows. Catalyzes the NADPH-dependent reduction of a wide variety of carbonyl-containing compounds to their corresponding alcohols. Displays enzymatic activity towards endogenous metabolites such as aromatic and aliphatic aldehydes, ketones, monosaccharides and bile acids, with a preference for negatively charged substrates, such as glucuronate and succinic semialdehyde. Plays an important role in ascorbic acid biosynthesis by catalyzing the reduction of D-glucuronic acid and D-glucurono-gamma-lactone. Functions as a detoxifiying enzyme by reducing a range of toxic aldehydes. Reduces methylglyoxal and 3-deoxyglucosone, which are present at elevated levels under hyperglycemic conditions and are cytotoxic. Involved also in the detoxification of lipid-derived aldehydes like acrolein. Plays a role in the activation of procarcinogens, such as polycyclic aromatic hydrocarbon trans-dihydrodiols, and in the metabolism of various xenobiotics and drugs. Also acts as an inhibitor of protein S-nitrosylation by mediating degradation of S-nitroso-coenzyme A (S-nitroso-CoA), a cofactor required to S-nitrosylate proteins. S-nitroso-CoA reductase activity is involved in reprogramming intermediary metabolism in renal proximal tubules, notably by inhibiting protein S-nitrosylation of isoform 2 of PKM (PKM2). Also acts as a S-nitroso-glutathione reductase by catalyzing the NADPH-dependent reduction of S-nitrosoglutathione. Displays no reductase activity towards retinoids. The polypeptide is Aldo-keto reductase family 1 member A1 (AKR1A1) (Sus scrofa (Pig)).